An 84-amino-acid chain; its full sequence is Mu-conotoxin-like Cal 12.2b (84 aa).

The first 19 residues, 1-19, serve as a signal peptide directing secretion; the sequence is MKLTCVLVVLLLVLPFGDL. The propeptide occupies 20–42; sequence ITTSNTEDNKRGATPWQNSLKAR. 4 disulfides stabilise this stretch: cysteine 45–cysteine 57, cysteine 52–cysteine 65, cysteine 59–cysteine 70, and cysteine 64–cysteine 76. At tryptophan 72 the chain carries 6'-bromotryptophan. Residue proline 77 is modified to 4-hydroxyproline. Tryptophan 81 bears the 6'-bromotryptophan mark.

The protein belongs to the conotoxin O1 superfamily. Expressed by the venom duct.

The protein resides in the secreted. Mu-conotoxins block voltage-gated sodium channels. This toxin reversibly blocks voltage-gated sodium channel in cephalopods, with no alteration in the voltage dependence of sodium conductance or on the kinetics of inactivation. The protein is Mu-conotoxin-like Cal 12.2b of Californiconus californicus (California cone).